The sequence spans 142 residues: ATP synthase epsilon chain (142 aa).

The protein belongs to the ATPase epsilon chain family. In terms of assembly, F-type ATPases have 2 components, CF(1) - the catalytic core - and CF(0) - the membrane proton channel. CF(1) has five subunits: alpha(3), beta(3), gamma(1), delta(1), epsilon(1). CF(0) has three main subunits: a, b and c.

The protein resides in the cell inner membrane. Produces ATP from ADP in the presence of a proton gradient across the membrane. The sequence is that of ATP synthase epsilon chain from Koribacter versatilis (strain Ellin345).